The primary structure comprises 290 residues: 4-hydroxy-tetrahydrodipicolinate synthase (290 aa).

Threonine 44 is a pyruvate binding site. The active-site Proton donor/acceptor is tyrosine 132. The active-site Schiff-base intermediate with substrate is the lysine 160. Position 202 (isoleucine 202) interacts with pyruvate.

This sequence belongs to the DapA family. Homotetramer; dimer of dimers.

The protein localises to the cytoplasm. The catalysed reaction is L-aspartate 4-semialdehyde + pyruvate = (2S,4S)-4-hydroxy-2,3,4,5-tetrahydrodipicolinate + H2O + H(+). The protein operates within amino-acid biosynthesis; L-lysine biosynthesis via DAP pathway; (S)-tetrahydrodipicolinate from L-aspartate: step 3/4. Its function is as follows. Catalyzes the condensation of (S)-aspartate-beta-semialdehyde [(S)-ASA] and pyruvate to 4-hydroxy-tetrahydrodipicolinate (HTPA). In Geotalea daltonii (strain DSM 22248 / JCM 15807 / FRC-32) (Geobacter daltonii), this protein is 4-hydroxy-tetrahydrodipicolinate synthase.